The chain runs to 181 residues: Adenine phosphoribosyltransferase (181 aa).

This sequence belongs to the purine/pyrimidine phosphoribosyltransferase family. Homodimer.

It is found in the cytoplasm. The enzyme catalyses AMP + diphosphate = 5-phospho-alpha-D-ribose 1-diphosphate + adenine. The protein operates within purine metabolism; AMP biosynthesis via salvage pathway; AMP from adenine: step 1/1. Its function is as follows. Catalyzes a salvage reaction resulting in the formation of AMP, that is energically less costly than de novo synthesis. This is Adenine phosphoribosyltransferase from Colwellia psychrerythraea (strain 34H / ATCC BAA-681) (Vibrio psychroerythus).